A 197-amino-acid polypeptide reads, in one-letter code: NADH-quinone oxidoreductase subunit C (197 aa).

This sequence belongs to the complex I 30 kDa subunit family. NDH-1 is composed of 14 different subunits. Subunits NuoB, C, D, E, F, and G constitute the peripheral sector of the complex.

It localises to the cell inner membrane. The enzyme catalyses a quinone + NADH + 5 H(+)(in) = a quinol + NAD(+) + 4 H(+)(out). Functionally, NDH-1 shuttles electrons from NADH, via FMN and iron-sulfur (Fe-S) centers, to quinones in the respiratory chain. The immediate electron acceptor for the enzyme in this species is believed to be ubiquinone. Couples the redox reaction to proton translocation (for every two electrons transferred, four hydrogen ions are translocated across the cytoplasmic membrane), and thus conserves the redox energy in a proton gradient. The sequence is that of NADH-quinone oxidoreductase subunit C from Neisseria meningitidis serogroup B (strain ATCC BAA-335 / MC58).